A 318-amino-acid polypeptide reads, in one-letter code: Methionyl-tRNA formyltransferase (318 aa).

A (6S)-5,6,7,8-tetrahydrofolate-binding site is contributed by 112 to 115; it reads SILP.

It belongs to the Fmt family.

It carries out the reaction L-methionyl-tRNA(fMet) + (6R)-10-formyltetrahydrofolate = N-formyl-L-methionyl-tRNA(fMet) + (6S)-5,6,7,8-tetrahydrofolate + H(+). Attaches a formyl group to the free amino group of methionyl-tRNA(fMet). The formyl group appears to play a dual role in the initiator identity of N-formylmethionyl-tRNA by promoting its recognition by IF2 and preventing the misappropriation of this tRNA by the elongation apparatus. The protein is Methionyl-tRNA formyltransferase of Shewanella sp. (strain MR-4).